An 82-amino-acid polypeptide reads, in one-letter code: uncharacterized protein (82 aa).

3 consecutive transmembrane segments (helical) span residues 1–21 (MSASKILVGCWLGLAVLSVST), 22–42 (VLLGNAGATLALAAGVLLAAF), and 62–82 (WRLLLLGWPLLMAIGVLLTLL).

It localises to the cell membrane. This is an uncharacterized protein from Stutzerimonas stutzeri (Pseudomonas stutzeri).